The chain runs to 1607 residues: Thrombospondin type-1 domain-containing protein 7B (1607 aa).

Positions 1-31 are cleaved as a signal peptide; the sequence is MFLRSDLAVTHWVSRSMRKLFLVLSLLLSQA. At 32–1556 the chain is on the extracellular side; sequence AHLEGRKDNQ…QPLDPDGRVK (1525 aa). TSP type-1 domains follow at residues 40 to 98, 102 to 177, 179 to 233, 336 to 392, 399 to 482, 484 to 543, 601 to 661, 662 to 735, 737 to 796, 797 to 869, 871 to 924, 925 to 999, 1001 to 1126, 1128 to 1182, 1183 to 1246, 1248 to 1303, 1304 to 1369, and 1371 to 1432; these read NQFL…RVCD, DLFQ…IPCP, DCVV…VSCP, DCET…IAEG, PRYS…VPCS, DCIV…PMCH, DCVV…HSCT, QLYW…LPCK, DCLV…SLCP, SYRW…IPCR, DCTF…CPCD, TFMS…IPCP, DCKL…LLCP, ECVM…ENCF, QFQY…VECV, NCQL…TPCY, SWVL…VPCP, and DCHI…GKCY. Residues Asn-150 and Asn-219 are each glycosylated (N-linked (GlcNAc...) asparagine). Disulfide bonds link Cys-411–Cys-477, Cys-431–Cys-481, and Cys-442–Cys-466. 3 disulfides stabilise this stretch: Cys-602-Cys-643, Cys-613-Cys-617, and Cys-655-Cys-660. Asn-683 carries an N-linked (GlcNAc...) asparagine glycan. Disulfide bonds link Cys-738–Cys-779, Cys-749–Cys-753, and Cys-789–Cys-795. Asn-757 is a glycosylation site (N-linked (GlcNAc...) asparagine). A glycan (N-linked (GlcNAc...) asparagine) is linked at Asn-842. Asn-933 carries an N-linked (GlcNAc...) asparagine glycan. 5 disulfides stabilise this stretch: Cys-937-Cys-994, Cys-960-Cys-998, Cys-971-Cys-984, Cys-1002-Cys-1039, and Cys-1013-Cys-1017. Asn-985 carries an N-linked (GlcNAc...) asparagine glycan. Asn-1105 carries an N-linked (GlcNAc...) asparagine glycan. A disulfide bridge connects residues Cys-1121 and Cys-1125. Asn-1187 and Asn-1199 each carry an N-linked (GlcNAc...) asparagine glycan. 3 cysteine pairs are disulfide-bonded: Cys-1249–Cys-1287, Cys-1260–Cys-1264, and Cys-1297–Cys-1302. N-linked (GlcNAc...) asparagine glycosylation is found at Asn-1309 and Asn-1335. Disulfide bonds link Cys-1372–Cys-1416, Cys-1383–Cys-1387, and Cys-1426–Cys-1431. N-linked (GlcNAc...) asparagine glycosylation is found at Asn-1457 and Asn-1525. Residues 1557 to 1577 traverse the membrane as a helical segment; sequence MWVYGVSGGSFLIMIFLVFTS. The Cytoplasmic segment spans residues 1578-1607; the sequence is YLVCKKPKPHQSTPRHQKPLTLAYDGDLDM.

Its subcellular location is the membrane. In Mus musculus (Mouse), this protein is Thrombospondin type-1 domain-containing protein 7B.